Reading from the N-terminus, the 418-residue chain is 1-deoxy-D-xylulose 5-phosphate reductoisomerase (418 aa).

The NADPH site is built by Thr32, Gly33, Ser34, Ile35, and Asn150. Lys151 is a 1-deoxy-D-xylulose 5-phosphate binding site. NADPH is bound at residue Glu152. A Mn(2+)-binding site is contributed by Asp174. Ser175, Glu176, Ser200, and His223 together coordinate 1-deoxy-D-xylulose 5-phosphate. Glu176 lines the Mn(2+) pocket. Gly229 lines the NADPH pocket. 4 residues coordinate 1-deoxy-D-xylulose 5-phosphate: Ser236, Asn241, Lys242, and Glu245. Glu245 serves as a coordination point for Mn(2+).

This sequence belongs to the DXR family. The cofactor is Mg(2+). Requires Mn(2+) as cofactor.

The catalysed reaction is 2-C-methyl-D-erythritol 4-phosphate + NADP(+) = 1-deoxy-D-xylulose 5-phosphate + NADPH + H(+). It functions in the pathway isoprenoid biosynthesis; isopentenyl diphosphate biosynthesis via DXP pathway; isopentenyl diphosphate from 1-deoxy-D-xylulose 5-phosphate: step 1/6. In terms of biological role, catalyzes the NADPH-dependent rearrangement and reduction of 1-deoxy-D-xylulose-5-phosphate (DXP) to 2-C-methyl-D-erythritol 4-phosphate (MEP). The polypeptide is 1-deoxy-D-xylulose 5-phosphate reductoisomerase (Streptomyces coelicolor (strain ATCC BAA-471 / A3(2) / M145)).